Consider the following 231-residue polypeptide: Large ribosomal subunit protein uL1 (231 aa).

It belongs to the universal ribosomal protein uL1 family. As to quaternary structure, part of the 50S ribosomal subunit.

In terms of biological role, binds directly to 23S rRNA. The L1 stalk is quite mobile in the ribosome, and is involved in E site tRNA release. Protein L1 is also a translational repressor protein, it controls the translation of the L11 operon by binding to its mRNA. The chain is Large ribosomal subunit protein uL1 from Staphylococcus haemolyticus (strain JCSC1435).